Here is a 338-residue protein sequence, read N- to C-terminus: 4-hydroxy-3-methylbut-2-enyl diphosphate reductase (338 aa).

[4Fe-4S] cluster is bound at residue cysteine 21. (2E)-4-hydroxy-3-methylbut-2-enyl diphosphate-binding residues include histidine 50 and histidine 83. Positions 50 and 83 each coordinate dimethylallyl diphosphate. Residues histidine 50 and histidine 83 each coordinate isopentenyl diphosphate. Cysteine 105 serves as a coordination point for [4Fe-4S] cluster. Histidine 133 lines the (2E)-4-hydroxy-3-methylbut-2-enyl diphosphate pocket. Histidine 133 provides a ligand contact to dimethylallyl diphosphate. Histidine 133 contributes to the isopentenyl diphosphate binding site. Glutamate 135 serves as the catalytic Proton donor. Residue threonine 173 coordinates (2E)-4-hydroxy-3-methylbut-2-enyl diphosphate. Cysteine 203 is a [4Fe-4S] cluster binding site. Residues serine 231, serine 232, asparagine 233, and serine 276 each contribute to the (2E)-4-hydroxy-3-methylbut-2-enyl diphosphate site. Dimethylallyl diphosphate contacts are provided by serine 231, serine 232, asparagine 233, and serine 276. Residues serine 231, serine 232, asparagine 233, and serine 276 each contribute to the isopentenyl diphosphate site.

Belongs to the IspH family. Requires [4Fe-4S] cluster as cofactor.

The catalysed reaction is isopentenyl diphosphate + 2 oxidized [2Fe-2S]-[ferredoxin] + H2O = (2E)-4-hydroxy-3-methylbut-2-enyl diphosphate + 2 reduced [2Fe-2S]-[ferredoxin] + 2 H(+). It catalyses the reaction dimethylallyl diphosphate + 2 oxidized [2Fe-2S]-[ferredoxin] + H2O = (2E)-4-hydroxy-3-methylbut-2-enyl diphosphate + 2 reduced [2Fe-2S]-[ferredoxin] + 2 H(+). It functions in the pathway isoprenoid biosynthesis; dimethylallyl diphosphate biosynthesis; dimethylallyl diphosphate from (2E)-4-hydroxy-3-methylbutenyl diphosphate: step 1/1. It participates in isoprenoid biosynthesis; isopentenyl diphosphate biosynthesis via DXP pathway; isopentenyl diphosphate from 1-deoxy-D-xylulose 5-phosphate: step 6/6. Catalyzes the conversion of 1-hydroxy-2-methyl-2-(E)-butenyl 4-diphosphate (HMBPP) into a mixture of isopentenyl diphosphate (IPP) and dimethylallyl diphosphate (DMAPP). Acts in the terminal step of the DOXP/MEP pathway for isoprenoid precursor biosynthesis. The protein is 4-hydroxy-3-methylbut-2-enyl diphosphate reductase of Streptomyces avermitilis (strain ATCC 31267 / DSM 46492 / JCM 5070 / NBRC 14893 / NCIMB 12804 / NRRL 8165 / MA-4680).